A 374-amino-acid polypeptide reads, in one-letter code: Chaperone protein DnaJ (374 aa).

Residues 4 to 68 (DYYEILGVSR…ETRNRYDRFG (65 aa)) form the J domain. The CR-type zinc finger occupies 133–215 (GGEKEIRIRH…CGGSGRRQET (83 aa)). Zn(2+) is bound by residues C146, C149, C163, C166, C189, C192, C203, and C206. 4 CXXCXGXG motif repeats span residues 146–153 (CQTCKGSG), 163–170 (CTTCSGTG), 189–196 (CPTCDGAG), and 203–210 (CDVCGGSG).

Belongs to the DnaJ family. Homodimer. Requires Zn(2+) as cofactor.

It is found in the cytoplasm. Functionally, participates actively in the response to hyperosmotic and heat shock by preventing the aggregation of stress-denatured proteins and by disaggregating proteins, also in an autonomous, DnaK-independent fashion. Unfolded proteins bind initially to DnaJ; upon interaction with the DnaJ-bound protein, DnaK hydrolyzes its bound ATP, resulting in the formation of a stable complex. GrpE releases ADP from DnaK; ATP binding to DnaK triggers the release of the substrate protein, thus completing the reaction cycle. Several rounds of ATP-dependent interactions between DnaJ, DnaK and GrpE are required for fully efficient folding. Also involved, together with DnaK and GrpE, in the DNA replication of plasmids through activation of initiation proteins. In Microcystis aeruginosa (strain NIES-843 / IAM M-2473), this protein is Chaperone protein DnaJ.